The chain runs to 425 residues: Enolase (425 aa).

Q170 serves as a coordination point for (2R)-2-phosphoglycerate. The active-site Proton donor is the E214. D250, E291, and D317 together coordinate Mg(2+). (2R)-2-phosphoglycerate-binding residues include K342, R371, S372, and K393. K342 serves as the catalytic Proton acceptor.

Belongs to the enolase family. Mg(2+) is required as a cofactor.

Its subcellular location is the cytoplasm. It localises to the secreted. The protein resides in the cell surface. The catalysed reaction is (2R)-2-phosphoglycerate = phosphoenolpyruvate + H2O. It functions in the pathway carbohydrate degradation; glycolysis; pyruvate from D-glyceraldehyde 3-phosphate: step 4/5. Catalyzes the reversible conversion of 2-phosphoglycerate (2-PG) into phosphoenolpyruvate (PEP). It is essential for the degradation of carbohydrates via glycolysis. This Methanococcoides burtonii (strain DSM 6242 / NBRC 107633 / OCM 468 / ACE-M) protein is Enolase.